A 313-amino-acid polypeptide reads, in one-letter code: Olfactory receptor 1D2 (313 aa).

Topologically, residues 1–25 (MDGGNQSEGSEFLLLGMSESPEQQR) are extracellular. An N-linked (GlcNAc...) asparagine glycan is attached at asparagine 5. The chain crosses the membrane as a helical span at residues 26–49 (ILFWMFLSMYLVTVLGNVLIILAI). Over 50 to 57 (SSDSRLHT) the chain is Cytoplasmic. A helical membrane pass occupies residues 58–79 (PMYFFLANLSFTDLFFVTNTIP). Topologically, residues 80–100 (KMLVNLQSQDKAISYAGCLTQ) are extracellular. Cysteines 97 and 189 form a disulfide. Residues 101 to 120 (LYFLLSLVTLDNLILAVMAY) form a helical membrane-spanning segment. The Cytoplasmic portion of the chain corresponds to 121 to 139 (DRYVAICCPLHYVTAMSPR). A helical transmembrane segment spans residues 140–158 (LCILLLSLCWVFSVLYGLI). Topologically, residues 159–196 (HTLLMTRVTFCGSRKIHYLFCEMYFLLRLACSNIQINH) are extracellular. An N-linked (GlcNAc...) asparagine glycan is attached at asparagine 195. A helical transmembrane segment spans residues 197–219 (TVLXATGCFIFLIPLGFMIXSYA). Topologically, residues 220–236 (RIVRAILRIPSATGKYK) are cytoplasmic. A helical membrane pass occupies residues 237 to 259 (AFSTCASHLAVVSLFYGTLGMVY). Topologically, residues 260 to 271 (LQPLQTYSTKDS) are extracellular. A helical transmembrane segment spans residues 272 to 291 (VATVMYAVVTPMMNPFIYSL). The Cytoplasmic segment spans residues 292–313 (RNKDIHGALGRLLQGKAFQKLT).

It belongs to the G-protein coupled receptor 1 family.

It is found in the cell membrane. Functionally, odorant receptor. This Pongo pygmaeus (Bornean orangutan) protein is Olfactory receptor 1D2 (OR1D2).